A 414-amino-acid chain; its full sequence is MWEDSLTVFCGIDWAERHHDVAIVDDTGTLLAKARITDDVAGYNKLLDLLAEHGDSSATPIPVAIETSHGLLVAALRTGSRKVFAINPLAAARYRDRHGVSRKKSDPGDALVLANILRTDMHAHRPLPADSELAQAITVLARAQQDAVWNRQQVANQVRSLLREYYPAALHAFQSKDGGLTRPDARVILTMAPTPAKAAKLTLAQLRAGLKRSGRTRAFNTEIERLRGIFRSEYARQLPAVEDAFGHQLLALLRQLDATCLAADDLAKAVEDAFREHADSEILLSFPGLGPLLGARVLAEIGDDRSRFTDARALKSYAGSAPITRASGRKHFVGRRFVKNNRLMNAGFLWAFAALQASPGANAHYRRRREHGDWHAAAQRHLLNRFLGQLHHCLQTRQHFDEQRAFAPLLQAAA.

The chain is Mini-circle putative transposase for IS117 from Streptomyces coelicolor (strain ATCC BAA-471 / A3(2) / M145).